The primary structure comprises 602 residues: MPRMTQLDLIRNFSIVAHIDHGKSTLADRLIQLTGTVAERDMKAQILDSMEIERERGITIKANTVRIDYPAKDGRTYVLNLIDTPGHVDFAYEVSRSMRAVEGSLLVVDASQGVEAQTLANVYQALDAGHEIVPVLNKIDLPAAEPERVKSQIEDVIGLDASDAVLISAKSGLGIPDVLEAIVHRLPPPKGDREAPLKAMLVDSWYDAYLGVVVMIRVMDGVIRKGDRVKMMQTGAVYGIDRLAVLKPQMVDIAELGPGEIGVLTASIKQVRDTRVGDTITHEKKGCAAPLPGFKPAQPVVFCGLFPVDANDFEALREAIEKLALNDASFTYEMETSAALGFGFRCGFLGLLHLEVVRDRLEREYDLDLITTAPSVVYQIYMKDGTLQELHNPTDMPDLTYVDHIEEPRIRATIMVPDEYLGDVLKLCQDRRGIQLDLSYAGARAMVVYDLPLNEVVFDFYDRLKSVTKGYASFDYQITGYREDFLVKMSILVNDEPVDALSMMVHRDRADMRGRAMVEKLKELIPRHMFKIPIQAAIGGRVIARETISAMRKDVTAKCYGGDATRKRKLLDKQKAGKKKMRQFGKVEIPQQAFINALKMDS.

The tr-type G domain occupies 8–190 (DLIRNFSIVA…AIVHRLPPPK (183 aa)). Residues 20–25 (DHGKST) and 137–140 (NKID) contribute to the GTP site.

This sequence belongs to the TRAFAC class translation factor GTPase superfamily. Classic translation factor GTPase family. LepA subfamily.

It is found in the cell inner membrane. It catalyses the reaction GTP + H2O = GDP + phosphate + H(+). Its function is as follows. Required for accurate and efficient protein synthesis under certain stress conditions. May act as a fidelity factor of the translation reaction, by catalyzing a one-codon backward translocation of tRNAs on improperly translocated ribosomes. Back-translocation proceeds from a post-translocation (POST) complex to a pre-translocation (PRE) complex, thus giving elongation factor G a second chance to translocate the tRNAs correctly. Binds to ribosomes in a GTP-dependent manner. This chain is Elongation factor 4, found in Cereibacter sphaeroides (strain ATCC 17029 / ATH 2.4.9) (Rhodobacter sphaeroides).